The sequence spans 265 residues: Small ribosomal subunit protein uS3 (265 aa).

The KH type-2 domain maps to 39–111 (IREFLNENFS…EVILNIIEVR (73 aa)). The interval 224-250 (FEAGNQRRGQKRRPRNDQPVKDLNKEK) is disordered. Over residues 238–250 (RNDQPVKDLNKEK) the composition is skewed to basic and acidic residues.

It belongs to the universal ribosomal protein uS3 family. Part of the 30S ribosomal subunit. Forms a tight complex with proteins S10 and S14.

Binds the lower part of the 30S subunit head. Binds mRNA in the 70S ribosome, positioning it for translation. This chain is Small ribosomal subunit protein uS3, found in Acholeplasma laidlawii.